We begin with the raw amino-acid sequence, 75 residues long: Carwaprin-a (75 aa).

The N-terminal stretch at 1 to 24 (MSSGGLLLLLGLLTLWAELTPISG) is a signal peptide. The 46-residue stretch at 27 to 72 (RPKKPGLCPPRPQKPPCVRECKNDWRCPGEQKCCRYGCIYECRDPI) folds into the WAP domain. 4 cysteine pairs are disulfide-bonded: Cys-34/Cys-60, Cys-43/Cys-64, Cys-47/Cys-59, and Cys-53/Cys-68.

This sequence belongs to the venom waprin family. In terms of tissue distribution, expressed by the venom gland.

It is found in the secreted. In terms of biological role, damages membranes of susceptible bacteria. Has no hemolytic activity. Not toxic to mice. Does not inhibit the proteinases elastase and cathepsin G. The sequence is that of Carwaprin-a from Tropidechis carinatus (Australian rough-scaled snake).